The sequence spans 174 residues: ATP-dependent protease subunit HslV (174 aa).

The active site involves Thr-2. Gly-157, Cys-160, and Thr-163 together coordinate Na(+).

The protein belongs to the peptidase T1B family. HslV subfamily. As to quaternary structure, a double ring-shaped homohexamer of HslV is capped on each side by a ring-shaped HslU homohexamer. The assembly of the HslU/HslV complex is dependent on binding of ATP.

It localises to the cytoplasm. It carries out the reaction ATP-dependent cleavage of peptide bonds with broad specificity.. Allosterically activated by HslU binding. Its function is as follows. Protease subunit of a proteasome-like degradation complex believed to be a general protein degrading machinery. This is ATP-dependent protease subunit HslV from Shewanella sediminis (strain HAW-EB3).